The sequence spans 312 residues: Ribonuclease HIII (312 aa).

The 217-residue stretch at 95-311 (FNCIGSDEAG…REKAQKILKP (217 aa)) folds into the RNase H type-2 domain. 3 residues coordinate a divalent metal cation: Asp101, Glu102, and Asp206.

It belongs to the RNase HII family. RnhC subfamily. Mn(2+) is required as a cofactor. Requires Mg(2+) as cofactor.

It is found in the cytoplasm. The catalysed reaction is Endonucleolytic cleavage to 5'-phosphomonoester.. Functionally, endonuclease that specifically degrades the RNA of RNA-DNA hybrids. The chain is Ribonuclease HIII from Staphylococcus aureus (strain MW2).